Consider the following 64-residue polypeptide: Conotoxin LiC121 (64 aa).

Positions 1-22 (MRCVPVFIILLLLSPSAPSVDA) are cleaved as a signal peptide. Positions 23 to 48 (HPKTKDDVPLASFHDDAKRTLQRLWI) are excised as a propeptide.

This sequence belongs to the conotoxin T superfamily. Contains 2 disulfide bonds that can be either 'C1-C3, C2-C4' or 'C1-C4, C2-C3', since these disulfide connectivities have been observed for conotoxins with cysteine framework V (for examples, see AC P0DQQ7 and AC P81755). In terms of tissue distribution, expressed by the venom duct.

Its subcellular location is the secreted. The sequence is that of Conotoxin LiC121 from Conus lividus (Livid cone).